A 995-amino-acid polypeptide reads, in one-letter code: Bifunctional glutamine synthetase adenylyltransferase/adenylyl-removing enzyme (995 aa).

Positions M1–L487 are adenylyl removase. Positions A492–S995 are adenylyl transferase.

The protein belongs to the GlnE family. It depends on Mg(2+) as a cofactor.

The enzyme catalyses [glutamine synthetase]-O(4)-(5'-adenylyl)-L-tyrosine + phosphate = [glutamine synthetase]-L-tyrosine + ADP. It catalyses the reaction [glutamine synthetase]-L-tyrosine + ATP = [glutamine synthetase]-O(4)-(5'-adenylyl)-L-tyrosine + diphosphate. Involved in the regulation of glutamine synthetase GlnA, a key enzyme in the process to assimilate ammonia. When cellular nitrogen levels are high, the C-terminal adenylyl transferase (AT) inactivates GlnA by covalent transfer of an adenylyl group from ATP to specific tyrosine residue of GlnA, thus reducing its activity. Conversely, when nitrogen levels are low, the N-terminal adenylyl removase (AR) activates GlnA by removing the adenylyl group by phosphorolysis, increasing its activity. The regulatory region of GlnE binds the signal transduction protein PII (GlnB) which indicates the nitrogen status of the cell. The protein is Bifunctional glutamine synthetase adenylyltransferase/adenylyl-removing enzyme of Mycobacterium marinum (strain ATCC BAA-535 / M).